A 150-amino-acid polypeptide reads, in one-letter code: SsrA-binding protein (150 aa).

The interval 127-150 is disordered; that stretch reads KRETEKQRDWQREKARIMKGDAKD.

Belongs to the SmpB family.

It localises to the cytoplasm. Functionally, required for rescue of stalled ribosomes mediated by trans-translation. Binds to transfer-messenger RNA (tmRNA), required for stable association of tmRNA with ribosomes. tmRNA and SmpB together mimic tRNA shape, replacing the anticodon stem-loop with SmpB. tmRNA is encoded by the ssrA gene; the 2 termini fold to resemble tRNA(Ala) and it encodes a 'tag peptide', a short internal open reading frame. During trans-translation Ala-aminoacylated tmRNA acts like a tRNA, entering the A-site of stalled ribosomes, displacing the stalled mRNA. The ribosome then switches to translate the ORF on the tmRNA; the nascent peptide is terminated with the 'tag peptide' encoded by the tmRNA and targeted for degradation. The ribosome is freed to recommence translation, which seems to be the essential function of trans-translation. This chain is SsrA-binding protein, found in Cupriavidus necator (strain ATCC 17699 / DSM 428 / KCTC 22496 / NCIMB 10442 / H16 / Stanier 337) (Ralstonia eutropha).